Reading from the N-terminus, the 408-residue chain is Protein ZNF365 (408 aa).

A Phosphoserine modification is found at S16. The segment at 26-51 (FRCPRCGDHTRFRSLSSLRAHLEFSH) adopts a C2H2-type; degenerate zinc-finger fold. Phosphoserine occurs at positions 139 and 146. Residues 170-298 (VEAVDRTIEK…QLEYYQSQQA (129 aa)) are a coiled coil. T176 is modified (phosphothreonine). Residue S370 is modified to Phosphoserine.

Homodimer. Interacts with NDE1 and NDEL1. Interacts with DISC1. Interacts with PARP1. Interacts with MCRS1. As to expression, detected in several tissues, with highest levels in brain. Also expressed during embryonic development. Expressed in cerebral cortex, hippocampus, striatum, inferior colliculus and thalamus.

It is found in the cytoplasm. The protein resides in the cytoskeleton. It localises to the microtubule organizing center. The protein localises to the centrosome. Its function is as follows. Contributes to genomic stability by preventing telomere dysfunction. Involved in the morphogenesis of basket cells in the somatosensory cortex during embryogenesis. Involved in the positive regulation of oligodendrocyte differentiation during postnatal growth. Involved in dendritic arborization, morphogenesis of spine density dendrite, and establishment of postsynaptic dendrite density in cortical pyramidal neurons. Involved in the regulation of neurogenesis. Negatively regulates neurite outgrowth. Involved in homologous recombination (HR) repair pathway. Required for proper resolution of DNA double-strand breaks (DSBs) by HR. Is required for recovery of stalled replication forks, and directly contributes to genomic stability. Interacts with PARP1 and mediates MRE11-dependent DNA end resection during replication fork recovery. This Mus musculus (Mouse) protein is Protein ZNF365 (Znf365).